A 60-amino-acid chain; its full sequence is Phospholipase A2 (60 aa).

Residues tyrosine 27, glycine 29, and glycine 31 each coordinate Ca(2+). Cysteine 28 and cysteine 44 form a disulfide bridge. Residue histidine 47 is part of the active site. Aspartate 48 contacts Ca(2+).

Ca(2+) is required as a cofactor. Expressed by the venom gland.

The protein resides in the secreted. The catalysed reaction is a 1,2-diacyl-sn-glycero-3-phosphocholine + H2O = a 1-acyl-sn-glycero-3-phosphocholine + a fatty acid + H(+). Snake venom phospholipase A2 (PLA2) that displays mild but significant inhibition of mouse platelet aggregation induced by ADP and collagen. In vivo, induces edema in the foot pads and gastrocnemius muscles of mice but shows no myonecrotic or myotoxic activity. PA2 catalyzes the calcium-dependent hydrolysis of the 2-acyl groups in 3-sn-phosphoglycerides. The chain is Phospholipase A2 from Lachesis muta rhombeata (Bushmaster).